The chain runs to 130 residues: uncharacterized protein (130 aa).

The first 18 residues, 1-18 (MVEVWWSLIGAAVPALIA), serve as a signal peptide directing secretion.

This is an uncharacterized protein from Arabidopsis thaliana (Mouse-ear cress).